Reading from the N-terminus, the 333-residue chain is MSGTPDTLFALAAGATRTAAIEGISAAGADPALMAHTPSADAELLTYGHTVRAPVVPVSPSGCPTPAVITRAVRELVGFESLVIDAGLAEPTGAPTVTTGISPGADIRDETPVPDAEAAYSAAYEFGHGLHTDELVIAETIPGGTTTAMGVLAALGEPRIVSSSLPNNPVALKERVVDDALAASGLEQGDLAGEPVAAVRQMGDPVLAVVAGLAAGALDAGIDVTLAGGTQLATAGALVRHDGVTEPMTLATTSFVAGDDSAGIDALAADQDLAVTVTDPAFEARESHPAMAAYLDGEAKEGVGMGGALALAAEAGIGMDSVRNAIISVYDRV.

The protein belongs to the UPF0284 family.

This Halobacterium salinarum (strain ATCC 700922 / JCM 11081 / NRC-1) (Halobacterium halobium) protein is UPF0284 protein VNG_1572C.